We begin with the raw amino-acid sequence, 274 residues long: 2,3,4,5-tetrahydropyridine-2,6-dicarboxylate N-succinyltransferase (274 aa).

This sequence belongs to the transferase hexapeptide repeat family.

The protein localises to the cytoplasm. It carries out the reaction (S)-2,3,4,5-tetrahydrodipicolinate + succinyl-CoA + H2O = (S)-2-succinylamino-6-oxoheptanedioate + CoA. The protein operates within amino-acid biosynthesis; L-lysine biosynthesis via DAP pathway; LL-2,6-diaminopimelate from (S)-tetrahydrodipicolinate (succinylase route): step 1/3. The polypeptide is 2,3,4,5-tetrahydropyridine-2,6-dicarboxylate N-succinyltransferase (Leptothrix cholodnii (strain ATCC 51168 / LMG 8142 / SP-6) (Leptothrix discophora (strain SP-6))).